Reading from the N-terminus, the 477-residue chain is Aspartyl/glutamyl-tRNA(Asn/Gln) amidotransferase subunit B (477 aa).

The protein belongs to the GatB/GatE family. GatB subfamily. In terms of assembly, heterotrimer of A, B and C subunits.

The enzyme catalyses L-glutamyl-tRNA(Gln) + L-glutamine + ATP + H2O = L-glutaminyl-tRNA(Gln) + L-glutamate + ADP + phosphate + H(+). It carries out the reaction L-aspartyl-tRNA(Asn) + L-glutamine + ATP + H2O = L-asparaginyl-tRNA(Asn) + L-glutamate + ADP + phosphate + 2 H(+). In terms of biological role, allows the formation of correctly charged Asn-tRNA(Asn) or Gln-tRNA(Gln) through the transamidation of misacylated Asp-tRNA(Asn) or Glu-tRNA(Gln) in organisms which lack either or both of asparaginyl-tRNA or glutaminyl-tRNA synthetases. The reaction takes place in the presence of glutamine and ATP through an activated phospho-Asp-tRNA(Asn) or phospho-Glu-tRNA(Gln). This chain is Aspartyl/glutamyl-tRNA(Asn/Gln) amidotransferase subunit B, found in Coxiella burnetii (strain RSA 493 / Nine Mile phase I).